Consider the following 448-residue polypeptide: Glucose-6-phosphate isomerase (448 aa).

Catalysis depends on glutamate 290, which acts as the Proton donor. Active-site residues include histidine 311 and lysine 425.

Belongs to the GPI family.

It is found in the cytoplasm. The catalysed reaction is alpha-D-glucose 6-phosphate = beta-D-fructose 6-phosphate. Its pathway is carbohydrate biosynthesis; gluconeogenesis. It participates in carbohydrate degradation; glycolysis; D-glyceraldehyde 3-phosphate and glycerone phosphate from D-glucose: step 2/4. In terms of biological role, catalyzes the reversible isomerization of glucose-6-phosphate to fructose-6-phosphate. The chain is Glucose-6-phosphate isomerase from Latilactobacillus sakei subsp. sakei (strain 23K) (Lactobacillus sakei subsp. sakei).